The primary structure comprises 788 residues: Integrin beta-6 (788 aa).

A signal peptide spans 1–21 (MGIELLCLFFLFLGRNDHVQG). The PSI domain occupies 22-71 (GCALGGAETCEDCLLIGPQCAWCSQENFTYLSGVGERCDTPANLLAKGCQ). Over 22-709 (GCALGGAETC…KDCPKPPNSP (688 aa)) the chain is Extracellular. 28 disulfide bridges follow: C23-C41, C31-C454, C34-C59, C44-C70, C197-C204, C252-C293, C394-C406, C426-C452, C456-C476, C467-C479, C481-C490, C492-C519, C502-C517, C511-C522, C524-C537, C539-C560, C544-C558, C552-C563, C565-C574, C576-C599, C583-C597, C591-C602, C604-C614, C617-C620, C624-C670, C630-C649, C633-C645, and C678-C702. N-linked (GlcNAc...) asparagine glycans are attached at residues N48 and N97. One can recognise a VWFA domain in the interval 131-371 (YPVDLYYLMD…QLIISAYEEL (241 aa)). Mg(2+) is bound by residues D140, S142, and S144. The Ca(2+) site is built by S144, D147, D148, and E179. N235, D237, P239, and E240 together coordinate Ca(2+). E240 is a binding site for Mg(2+). N260 carries N-linked (GlcNAc...) asparagine glycosylation. Ca(2+) contacts are provided by D271 and K355. N-linked (GlcNAc...) asparagine glycosylation occurs at N387. The N-linked (GlcNAc...) asparagine glycan is linked to N418. 4 I-EGF domains span residues 456 to 491 (CQKE…PHCE), 492 to 538 (CGED…PYCQ), 539 to 575 (CDDF…EYCN), and 576 to 615 (CTTS…LTCE). N-linked (GlcNAc...) asparagine glycans are attached at residues N463 and N471. Residues 710–730 (MIMLGVSLAILLIGVVLLCIW) form a helical membrane-spanning segment. The segment at 731–758 (KLLVSFHDRKEVAKFEAERSKAKWQTGT) is interaction with HAX1. The Cytoplasmic segment spans residues 731–788 (KLLVSFHDRKEVAKFEAERSKAKWQTGTNPLYRGSTSTFKNVTYKHREKQKVDLSMDG).

The protein belongs to the integrin beta chain family. As to quaternary structure, heterodimer of an alpha and a beta subunit. Interacts with FLNB. Interacts with HAX1. ITGAV:ITGB6 interacts with FBN1. ITGAV:ITGB6 interacts with TGFB1.

Its subcellular location is the cell membrane. It is found in the cell junction. It localises to the focal adhesion. Its function is as follows. Integrin alpha-V:beta-6 (ITGAV:ITGB6) is a receptor for fibronectin and cytotactin. It recognizes the sequence R-G-D in its ligands. ITGAV:ITGB6 acts as a receptor for fibrillin-1 (FBN1) and mediates R-G-D-dependent cell adhesion to FBN1. Integrin alpha-V:beta-6 (ITGAV:ITGB6) mediates R-G-D-dependent release of transforming growth factor beta-1 (TGF-beta-1) from regulatory Latency-associated peptide (LAP), thereby playing a key role in TGF-beta-1 activation. This Sus scrofa (Pig) protein is Integrin beta-6 (ITGB6).